A 486-amino-acid polypeptide reads, in one-letter code: D-mannonate oxidoreductase (486 aa).

Position 25-36 (25-36 (IVHLGCGAFHRA)) interacts with NAD(+).

Belongs to the mannitol dehydrogenase family. UxuB subfamily.

The enzyme catalyses D-mannonate + NAD(+) = keto-D-fructuronate + NADH + H(+). It participates in carbohydrate metabolism; pentose and glucuronate interconversion. This chain is D-mannonate oxidoreductase (uxuB), found in Escherichia coli (strain K12).